The primary structure comprises 446 residues: Thymidine phosphorylase (446 aa).

It belongs to the thymidine/pyrimidine-nucleoside phosphorylase family. In terms of assembly, homodimer.

The enzyme catalyses thymidine + phosphate = 2-deoxy-alpha-D-ribose 1-phosphate + thymine. It functions in the pathway pyrimidine metabolism; dTMP biosynthesis via salvage pathway; dTMP from thymine: step 1/2. Functionally, the enzymes which catalyze the reversible phosphorolysis of pyrimidine nucleosides are involved in the degradation of these compounds and in their utilization as carbon and energy sources, or in the rescue of pyrimidine bases for nucleotide synthesis. In Idiomarina loihiensis (strain ATCC BAA-735 / DSM 15497 / L2-TR), this protein is Thymidine phosphorylase.